A 340-amino-acid polypeptide reads, in one-letter code: tRNA N6-adenosine threonylcarbamoyltransferase (340 aa).

H115 and H119 together coordinate Fe cation. Substrate contacts are provided by residues 138 to 142, D171, G184, D188, and N278; that span reads VVSGG. Fe cation is bound at residue D306.

This sequence belongs to the KAE1 / TsaD family. It depends on Fe(2+) as a cofactor.

Its subcellular location is the cytoplasm. The catalysed reaction is L-threonylcarbamoyladenylate + adenosine(37) in tRNA = N(6)-L-threonylcarbamoyladenosine(37) in tRNA + AMP + H(+). In terms of biological role, required for the formation of a threonylcarbamoyl group on adenosine at position 37 (t(6)A37) in tRNAs that read codons beginning with adenine. Is involved in the transfer of the threonylcarbamoyl moiety of threonylcarbamoyl-AMP (TC-AMP) to the N6 group of A37, together with TsaE and TsaB. TsaD likely plays a direct catalytic role in this reaction. In Clostridium botulinum (strain Hall / ATCC 3502 / NCTC 13319 / Type A), this protein is tRNA N6-adenosine threonylcarbamoyltransferase.